A 113-amino-acid polypeptide reads, in one-letter code: U11-theraphotoxin-Hhn1a (113 aa).

An N-terminal signal peptide occupies residues 1-21 (MNTVRVTFLLVFVLAVSLGQA). The propeptide occupies 22-74 (DKDENRMEVQEKTEQGKSYLDFAENLLLQKLEELEAKLLEEDSEESRNSRQKR). A disordered region spans residues 61–83 (EEDSEESRNSRQKRCIGEGVPCD). 3 cysteine pairs are disulfide-bonded: Cys75-Cys90, Cys82-Cys95, and Cys89-Cys110.

It belongs to the neurotoxin 14 (magi-1) family. 01 (HNTX-16) subfamily. As to expression, expressed by the venom gland.

Its subcellular location is the secreted. Functionally, probable ion channel inhibitor. The protein is U11-theraphotoxin-Hhn1a of Cyriopagopus hainanus (Chinese bird spider).